The following is a 615-amino-acid chain: TANK-binding kinase 1-binding protein 1 (615 aa).

The tract at residues 1-279 (MESMFEDDIS…QDLASNQSER (279 aa)) is homodimerization. Residues 48-162 (YGDIKERLGG…ALVETHLRQI (115 aa)) adopt a coiled-coil conformation. Phosphoserine is present on S184. Positions 221–276 (VSDLERRRLEEALEAAQGEARGAQLREEQLQAECERLQGELKQLQETRAQDLASNQ) form a coiled coil. An interaction with TBK1 and IKBKE region spans residues 280 to 329 (DMAWVKRVGDDQVNLALAYTELTEELGRLRELSSLQGRILRTLLQEQARS). The segment at 326–458 (QARSGGQRHS…SHHVKAGFQG (133 aa)) is disordered. Residues 345–365 (PQCPSPSPPARAAPPCPPCQS) show a composition bias toward pro residues. Phosphoserine occurs at positions 365, 372, 379, 385, 400, and 415. The span at 389–406 (PSCPSPVPQRRSPVPPSC) shows a compositional bias: pro residues. Over residues 416–435 (PVPPSCPAPQPRPPPPPPPG) the composition is skewed to pro residues. Residues S504 and S534 each carry the phosphoserine modification. A UBZ1-type zinc finger spans residues 583 to 609 (IRSCPLCQLGFPVGYPDDALIKHIDSH). 4 residues coordinate Zn(2+): C586, C589, H605, and H609.

In terms of assembly, homodimer. May form a heterodimer with NAP1. Interacts with TKB1 and IKBKE. Weakly interacts with DDX3X. (Microbial infection) Interacts with vaccinia virus protein C6. Detected in leukocytes, lung, placenta, small intestine, liver, kidney, spleen, muscle, heart, brain and at low levels in thymus.

Its function is as follows. Adapter protein which constitutively binds TBK1 and IKBKE playing a role in antiviral innate immunity. This chain is TANK-binding kinase 1-binding protein 1, found in Homo sapiens (Human).